The primary structure comprises 156 residues: Small ribosomal subunit protein uS7 (156 aa).

This sequence belongs to the universal ribosomal protein uS7 family. In terms of assembly, part of the 30S ribosomal subunit. Contacts proteins S9 and S11.

One of the primary rRNA binding proteins, it binds directly to 16S rRNA where it nucleates assembly of the head domain of the 30S subunit. Is located at the subunit interface close to the decoding center, probably blocks exit of the E-site tRNA. The chain is Small ribosomal subunit protein uS7 from Solibacter usitatus (strain Ellin6076).